Consider the following 470-residue polypeptide: Macrophage metalloelastase (470 aa).

A signal peptide spans 1–16 (MKFLLILLLQATASGA). Positions 17-105 (LPLNSSTSLE…DVHHFREMPG (89 aa)) are cleaved as a propeptide — activation peptide. Asparagine 20 carries an N-linked (GlcNAc...) asparagine glycan. Residues 90–97 (PRCGVPDV) carry the Cysteine switch motif. Cysteine 92 contacts Zn(2+). Residues aspartate 124 and aspartate 158 each contribute to the Ca(2+) site. Histidine 168 and aspartate 170 together coordinate Zn(2+). Ca(2+)-binding residues include aspartate 175, glycine 176, glycine 178, and isoleucine 180. Histidine 183 contributes to the Zn(2+) binding site. Residues glycine 190, glycine 192, and aspartate 194 each coordinate Ca(2+). Zn(2+) is bound at residue histidine 196. Aspartate 198, glutamate 199, and glutamate 201 together coordinate Ca(2+). Position 218 (histidine 218) interacts with Zn(2+). The active site involves glutamate 219. 2 residues coordinate Zn(2+): histidine 222 and histidine 228. Hemopexin repeat units lie at residues 279–328 (PALC…WPTL), 329–375 (PSGI…GFPN), 377–425 (VKKI…FQGI), and 426–470 (GPKI…WFGC). Cysteine 282 and cysteine 470 are disulfide-bonded. N-linked (GlcNAc...) asparagine glycosylation occurs at asparagine 285. Residues aspartate 289, glutamate 333, aspartate 381, and aspartate 430 each coordinate Ca(2+).

This sequence belongs to the peptidase M10A family. Ca(2+) is required as a cofactor. Zn(2+) serves as cofactor. In terms of tissue distribution, found in alveolar macrophages but not in peripheral blood monocytes.

The protein resides in the secreted. It is found in the extracellular space. Its subcellular location is the extracellular matrix. The enzyme catalyses Hydrolysis of soluble and insoluble elastin. Specific cleavages are also produced at 14-Ala-|-Leu-15 and 16-Tyr-|-Leu-17 in the B chain of insulin.. May be involved in tissue injury and remodeling. Has significant elastolytic activity. Can accept large and small amino acids at the P1' site, but has a preference for leucine. Aromatic or hydrophobic residues are preferred at the P1 site, with small hydrophobic residues (preferably alanine) occupying P3. The protein is Macrophage metalloelastase (MMP12) of Homo sapiens (Human).